Reading from the N-terminus, the 254-residue chain is MSEQQKTNEAAQTLDGWYALHDFRTMDWSAWKMLSSDERQIIISEFTGLLEKWGAAQKEGNGSHTLYSIVGQKADFMLMILRPTMEELNQIELEFNKSKLAEYTIPAYSYVSVVELSNYMGSGDGDPYENPQVRARLYPELPDAKYVCFYPMDKRRSGDDNWYMLSMEERRNLMRSHGMIGRGYAGKVKQIITGSIGFDDYEWGVTLFSDDVLQFKKLVYEMRFDEVSARYGEFGSFFVGNRLAKEQLPAFLHV.

Residues R136, 150-154 (YPMDK), H177, Q190, and S228 each bind Fe-coproporphyrin III. Residue Y150 is part of the active site.

Belongs to the ChdC family. Type 1 subfamily. Fe-coproporphyrin III is required as a cofactor.

It carries out the reaction Fe-coproporphyrin III + 2 H2O2 + 2 H(+) = heme b + 2 CO2 + 4 H2O. It catalyses the reaction Fe-coproporphyrin III + H2O2 + H(+) = harderoheme III + CO2 + 2 H2O. The enzyme catalyses harderoheme III + H2O2 + H(+) = heme b + CO2 + 2 H2O. It participates in porphyrin-containing compound metabolism; protoheme biosynthesis. Functionally, involved in coproporphyrin-dependent heme b biosynthesis. Catalyzes the decarboxylation of Fe-coproporphyrin III (coproheme) to heme b (protoheme IX), the last step of the pathway. The reaction occurs in a stepwise manner with a three-propionate intermediate. The polypeptide is Coproheme decarboxylase (Bacillus licheniformis (strain ATCC 14580 / DSM 13 / JCM 2505 / CCUG 7422 / NBRC 12200 / NCIMB 9375 / NCTC 10341 / NRRL NRS-1264 / Gibson 46)).